A 274-amino-acid chain; its full sequence is Thymidylate synthase (274 aa).

R21 is a dUMP binding site. Position 51 (H51) interacts with (6R)-5,10-methylene-5,6,7,8-tetrahydrofolate. DUMP is bound at residue 123 to 124 (RR). Catalysis depends on C156, which acts as the Nucleophile. Residues 176–179 (RSAD), N187, and 217–219 (HIY) each bind dUMP. D179 is a binding site for (6R)-5,10-methylene-5,6,7,8-tetrahydrofolate. Residue S273 participates in (6R)-5,10-methylene-5,6,7,8-tetrahydrofolate binding.

Belongs to the thymidylate synthase family. Bacterial-type ThyA subfamily. In terms of assembly, homodimer.

Its subcellular location is the cytoplasm. It carries out the reaction dUMP + (6R)-5,10-methylene-5,6,7,8-tetrahydrofolate = 7,8-dihydrofolate + dTMP. Its pathway is pyrimidine metabolism; dTTP biosynthesis. In terms of biological role, catalyzes the reductive methylation of 2'-deoxyuridine-5'-monophosphate (dUMP) to 2'-deoxythymidine-5'-monophosphate (dTMP) while utilizing 5,10-methylenetetrahydrofolate (mTHF) as the methyl donor and reductant in the reaction, yielding dihydrofolate (DHF) as a by-product. This enzymatic reaction provides an intracellular de novo source of dTMP, an essential precursor for DNA biosynthesis. The sequence is that of Thymidylate synthase from Francisella philomiragia subsp. philomiragia (strain ATCC 25017 / CCUG 19701 / FSC 153 / O#319-036).